A 529-amino-acid chain; its full sequence is Probable cytochrome P450 6t1 (529 aa).

A heme-binding site is contributed by Cys-472.

Belongs to the cytochrome P450 family. It depends on heme as a cofactor.

The protein localises to the endoplasmic reticulum membrane. Its subcellular location is the microsome membrane. In terms of biological role, may be involved in the metabolism of insect hormones and in the breakdown of synthetic insecticides. In Drosophila melanogaster (Fruit fly), this protein is Probable cytochrome P450 6t1 (Cyp6t1).